A 98-amino-acid polypeptide reads, in one-letter code: Cystatin-B (98 aa).

Residues 4 to 83 (GGTSQPVDAD…PCNGETLELS (80 aa)) form the Cystatin domain. A Secondary area of contact motif is present at residues 46–50 (QCVPG).

Belongs to the cystatin family. In terms of tissue distribution, ubiquitously expressed in normal and lipopolysaccharide (LPS)-stimulated tissues including brain, eye, gullet, heart, liver, muscle, stomach, kidney, spleen, pyloric ceca, intestine and gill.

The protein localises to the cytoplasm. Greatly decreased inhibitory activity against papain protease by metal ions including ZnSO(4), CuSO(4), HgCl(2) and CoCl(2). Decreased inhibitory activity against papain protease by detergents including Tween 20, SDS and Brij 35. Its function is as follows. Thiol protease inhibitor. Has high papain, bovine cathepsin B and fish cathepsins F and X inhibitory activity and inhibits fish cathepsins L, S and K to a lesser extent in vitro. May be involved in innate immunity. The polypeptide is Cystatin-B (Paralichthys olivaceus (Bastard halibut)).